The primary structure comprises 693 residues: Elongation factor G (693 aa).

In terms of domain architecture, tr-type G spans 8–282 (EKTRNIGIMA…AVIDYLPSPL (275 aa)). GTP is bound by residues 17–24 (AHIDAGKT), 81–85 (DTPGH), and 135–138 (NKMD).

Belongs to the TRAFAC class translation factor GTPase superfamily. Classic translation factor GTPase family. EF-G/EF-2 subfamily.

Its subcellular location is the cytoplasm. Its function is as follows. Catalyzes the GTP-dependent ribosomal translocation step during translation elongation. During this step, the ribosome changes from the pre-translocational (PRE) to the post-translocational (POST) state as the newly formed A-site-bound peptidyl-tRNA and P-site-bound deacylated tRNA move to the P and E sites, respectively. Catalyzes the coordinated movement of the two tRNA molecules, the mRNA and conformational changes in the ribosome. The sequence is that of Elongation factor G from Staphylococcus aureus (strain Mu3 / ATCC 700698).